Here is a 218-residue protein sequence, read N- to C-terminus: Cytochrome P450 3A19 (218 aa).

C153 is a binding site for heme.

It belongs to the cytochrome P450 family. Heme serves as cofactor.

The protein resides in the endoplasmic reticulum membrane. The protein localises to the microsome membrane. It catalyses the reaction an organic molecule + reduced [NADPH--hemoprotein reductase] + O2 = an alcohol + oxidized [NADPH--hemoprotein reductase] + H2O + H(+). Cytochromes P450 are a group of heme-thiolate monooxygenases. In liver microsomes, this enzyme is involved in an NADPH-dependent electron transport pathway. It oxidizes a variety of structurally unrelated compounds, including steroids, fatty acids, and xenobiotics. The sequence is that of Cytochrome P450 3A19 (CYP3A19) from Capra hircus aegagrus (Wild goat).